A 510-amino-acid polypeptide reads, in one-letter code: Leucine-rich repeat-containing protein 53 (510 aa).

LRR repeat units lie at residues 34–55, 58–79, 82–102, 108–129, 132–153, 158–179, and 182–203; these read TTRV…NLSL, NLAL…ALDG, MLRT…TDHT, SLQV…WFRN, GLTR…SFGG, SLRH…AFRP, and QLQE…FTPL. The region spanning 214–271 is the LRRCT domain; the sequence is NQWSCTCDLHPLARFLRNYIKSSAHTLRNAKDLNCQPSTAAVAAAQSVLRLSETNCDP. Residues 294–314 traverse the membrane as a helical segment; it reads LLTVLGFAGAVGLTCLGLVVF.

Its subcellular location is the membrane. In Macaca fascicularis (Crab-eating macaque), this protein is Leucine-rich repeat-containing protein 53 (LRRC53).